We begin with the raw amino-acid sequence, 1420 residues long: DNA-directed RNA polymerase subunit beta' (1420 aa).

Positions 70, 72, 85, and 88 each coordinate Zn(2+). Asp464, Asp466, and Asp468 together coordinate Mg(2+). Zn(2+) is bound by residues Cys823, Cys897, Cys904, and Cys907.

This sequence belongs to the RNA polymerase beta' chain family. In terms of assembly, the RNAP catalytic core consists of 2 alpha, 1 beta, 1 beta' and 1 omega subunit. When a sigma factor is associated with the core the holoenzyme is formed, which can initiate transcription. Requires Mg(2+) as cofactor. Zn(2+) serves as cofactor.

It carries out the reaction RNA(n) + a ribonucleoside 5'-triphosphate = RNA(n+1) + diphosphate. Its function is as follows. DNA-dependent RNA polymerase catalyzes the transcription of DNA into RNA using the four ribonucleoside triphosphates as substrates. This chain is DNA-directed RNA polymerase subunit beta', found in Polynucleobacter asymbioticus (strain DSM 18221 / CIP 109841 / QLW-P1DMWA-1) (Polynucleobacter necessarius subsp. asymbioticus).